The primary structure comprises 449 residues: Tubulin alpha chain (449 aa).

Residue Gln-11 coordinates GTP. An N6-acetyllysine modification is found at Lys-40. 7 residues coordinate GTP: Glu-71, Ser-140, Gly-144, Thr-145, Thr-179, Asn-206, and Asn-228. Glu-71 contacts Mg(2+). Residue Glu-254 is part of the active site.

This sequence belongs to the tubulin family. In terms of assembly, dimer of alpha and beta chains. A typical microtubule is a hollow water-filled tube with an outer diameter of 25 nm and an inner diameter of 15 nM. Alpha-beta heterodimers associate head-to-tail to form protofilaments running lengthwise along the microtubule wall with the beta-tubulin subunit facing the microtubule plus end conferring a structural polarity. Microtubules usually have 13 protofilaments but different protofilament numbers can be found in some organisms and specialized cells. Mg(2+) is required as a cofactor. Post-translationally, undergoes a tyrosination/detyrosination cycle, the cyclic removal and re-addition of a C-terminal tyrosine residue by the enzymes tubulin tyrosine carboxypeptidase (TTCP) and tubulin tyrosine ligase (TTL), respectively. Acetylation of alpha chains at Lys-40 stabilizes microtubules and affects affinity and processivity of microtubule motors. This modification has a role in multiple cellular functions, ranging from cell motility, cell cycle progression or cell differentiation to intracellular trafficking and signaling.

The protein localises to the cytoplasm. The protein resides in the cytoskeleton. The catalysed reaction is GTP + H2O = GDP + phosphate + H(+). Tubulin is the major constituent of microtubules, a cylinder consisting of laterally associated linear protofilaments composed of alpha- and beta-tubulin heterodimers. Microtubules grow by the addition of GTP-tubulin dimers to the microtubule end, where a stabilizing cap forms. Below the cap, tubulin dimers are in GDP-bound state, owing to GTPase activity of alpha-tubulin. The protein is Tubulin alpha chain of Tetrahymena pyriformis.